The primary structure comprises 198 residues: MRQFIVTGHDAPTTPDFSLDDIAGGAGRLDVLCRCVNSAFFLSHDIREDVRVHLVLGDEYTVRFEGSELRRLNPDERSTAALIRKALEKREEAIGHMPAESSPGVSIRRMGFETTLEEAASDATVVELHEDGDPVVQVEPPENPLFVLSDHHDFTDEEAELLAAAADERVRLGPEILHADHSITVAHNYLDTAGYSRY.

Leucine 128 lines the S-adenosyl-L-methionine pocket.

It belongs to the methyltransferase superfamily. TrmY family. Homodimer.

Its subcellular location is the cytoplasm. The catalysed reaction is pseudouridine(54) in tRNA + S-adenosyl-L-methionine = N(1)-methylpseudouridine(54) in tRNA + S-adenosyl-L-homocysteine + H(+). Specifically catalyzes the N1-methylation of pseudouridine at position 54 (Psi54) in tRNAs. The protein is tRNA (pseudouridine(54)-N(1))-methyltransferase of Haloferax volcanii (strain ATCC 29605 / DSM 3757 / JCM 8879 / NBRC 14742 / NCIMB 2012 / VKM B-1768 / DS2) (Halobacterium volcanii).